The chain runs to 971 residues: Mating-type switching protein swi1 (971 aa).

Ser528, Ser536, and Ser970 each carry phosphoserine.

In terms of assembly, fork protection complex (FPC) consisting of swi1 and swi3 interacts with mat1 cis-acting sequences and mat1-proximal polar-terminator of replication (RTS1).

The protein localises to the nucleus. Functionally, forms a fork protection complex (FPC) with swi3. FPC coordinates leading and lagging strand synthesis and moves with the replication fork. It is required for programmed fork-pausing which is necessary for mating-type switching. FPC stabilizes replication forks in a configuration that is recognized by replication checkpoint sensors. It is involved in termination at the mat1-proximal polar-terminator of replication (RTS1) and also required for activation of the Rad53-like checkpoint kinase cds1. The protein is Mating-type switching protein swi1 (swi1) of Schizosaccharomyces pombe (strain 972 / ATCC 24843) (Fission yeast).